The following is a 344-amino-acid chain: Phosphoribosylformylglycinamidine cyclo-ligase (344 aa).

It belongs to the AIR synthase family.

The protein resides in the cytoplasm. It carries out the reaction 2-formamido-N(1)-(5-O-phospho-beta-D-ribosyl)acetamidine + ATP = 5-amino-1-(5-phospho-beta-D-ribosyl)imidazole + ADP + phosphate + H(+). It participates in purine metabolism; IMP biosynthesis via de novo pathway; 5-amino-1-(5-phospho-D-ribosyl)imidazole from N(2)-formyl-N(1)-(5-phospho-D-ribosyl)glycinamide: step 2/2. The sequence is that of Phosphoribosylformylglycinamidine cyclo-ligase from Exiguobacterium sibiricum (strain DSM 17290 / CCUG 55495 / CIP 109462 / JCM 13490 / 255-15).